We begin with the raw amino-acid sequence, 395 residues long: Phosphoglycerate kinase (395 aa).

Substrate-binding positions include 21–23 (DIN), Arg-36, 59–62 (HFGR), Arg-114, and Arg-147. ATP contacts are provided by residues Lys-197, Glu-322, and 352–355 (GGDT).

The protein belongs to the phosphoglycerate kinase family. In terms of assembly, monomer.

It is found in the cytoplasm. It carries out the reaction (2R)-3-phosphoglycerate + ATP = (2R)-3-phospho-glyceroyl phosphate + ADP. It participates in carbohydrate degradation; glycolysis; pyruvate from D-glyceraldehyde 3-phosphate: step 2/5. The protein is Phosphoglycerate kinase of Roseobacter denitrificans (strain ATCC 33942 / OCh 114) (Erythrobacter sp. (strain OCh 114)).